The primary structure comprises 675 residues: Glycerophosphocholine phosphodiesterase GPCPD1 (675 aa).

The CBM20 domain occupies 1–115 (MTPSQVTFEI…IIIDDGQFGI (115 aa)). Substrate is bound by residues Arg-70 and 88–89 (HK). Ser-178 and Ser-427 each carry phosphoserine. Residues 321-621 (PLDVGHRGAG…DRIYDWMPEQ (301 aa)) enclose the GP-PDE domain. A Phosphotyrosine modification is found at Tyr-611.

The protein belongs to the glycerophosphoryl diester phosphodiesterase family. Widely expressed with highest levels in skeletal muscle and heart.

The protein localises to the cytoplasm. The protein resides in the cytosol. The enzyme catalyses sn-glycerol 3-phosphocholine + H2O = sn-glycerol 3-phosphate + choline + H(+). Functionally, may be involved in the negative regulation of skeletal muscle differentiation, independently of its glycerophosphocholine phosphodiesterase activity. The polypeptide is Glycerophosphocholine phosphodiesterase GPCPD1 (Gpcpd1) (Mus musculus (Mouse)).